The chain runs to 181 residues: ATP-dependent protease subunit HslV (181 aa).

Threonine 6 is a catalytic residue. Residues alanine 162, cysteine 165, and threonine 168 each contribute to the Na(+) site.

This sequence belongs to the peptidase T1B family. HslV subfamily. In terms of assembly, a double ring-shaped homohexamer of HslV is capped on each side by a ring-shaped HslU homohexamer. The assembly of the HslU/HslV complex is dependent on binding of ATP.

The protein resides in the cytoplasm. It catalyses the reaction ATP-dependent cleavage of peptide bonds with broad specificity.. Its activity is regulated as follows. Allosterically activated by HslU binding. Its function is as follows. Protease subunit of a proteasome-like degradation complex believed to be a general protein degrading machinery. In Solidesulfovibrio magneticus (strain ATCC 700980 / DSM 13731 / RS-1) (Desulfovibrio magneticus), this protein is ATP-dependent protease subunit HslV.